A 403-amino-acid polypeptide reads, in one-letter code: S-adenosylmethionine synthase (403 aa).

Histidine 17 is a binding site for ATP. Aspartate 19 contributes to the Mg(2+) binding site. Residue glutamate 45 coordinates K(+). Positions 58 and 104 each coordinate L-methionine. Positions 104–114 are flexible loop; sequence QSPDIAQGVDT. Residues 179-181, 250-251, aspartate 259, 265-266, alanine 282, and lysine 286 each bind ATP; these read DGK, KF, and RK. Aspartate 259 lines the L-methionine pocket. Position 290 (lysine 290) interacts with L-methionine.

Belongs to the AdoMet synthase family. Homotetramer; dimer of dimers. The cofactor is Mg(2+). Requires K(+) as cofactor.

The protein localises to the cytoplasm. It carries out the reaction L-methionine + ATP + H2O = S-adenosyl-L-methionine + phosphate + diphosphate. Its pathway is amino-acid biosynthesis; S-adenosyl-L-methionine biosynthesis; S-adenosyl-L-methionine from L-methionine: step 1/1. In terms of biological role, catalyzes the formation of S-adenosylmethionine (AdoMet) from methionine and ATP. The overall synthetic reaction is composed of two sequential steps, AdoMet formation and the subsequent tripolyphosphate hydrolysis which occurs prior to release of AdoMet from the enzyme. This chain is S-adenosylmethionine synthase, found in Mycolicibacterium paratuberculosis (strain ATCC BAA-968 / K-10) (Mycobacterium paratuberculosis).